A 627-amino-acid chain; its full sequence is Zinc finger protein 256 (627 aa).

The region spanning 14–96 (VTFEDVAVYF…QKTNPCEICG (83 aa)) is the KRAB domain. Residues 55 to 76 (GSGAGDEEAPYQQSTSPQRVSQ) form a disordered region. The segment covering 65 to 75 (YQQSTSPQRVS) has biased composition (polar residues). 15 C2H2-type zinc fingers span residues 90–112 (NPCE…QGTH), 239–261 (YMCS…LRVH), 267–289 (YTCG…RRIH), 295–317 (HQCD…QRVH), 323–345 (YKCS…QRIH), 351–373 (YECS…QRVH), 379–401 (YMCS…RRLH), 407–429 (YECS…QRVH), 435–457 (HECH…ERVH), 463–485 (YECS…WKVH), 491–513 (YECG…QRVH), 519–541 (YECN…RRSH), 547–569 (YECS…RRVH), 575–597 (YECS…QRIH), and 603–625 (YECS…QNVH).

This sequence belongs to the krueppel C2H2-type zinc-finger protein family. As to quaternary structure, interacts with TRIM28.

Its subcellular location is the nucleus. Its function is as follows. Transcriptional repressor that plays a role in cell proliferation. Requires TRIM28 for its activity. The polypeptide is Zinc finger protein 256 (ZNF256) (Homo sapiens (Human)).